Here is a 54-residue protein sequence, read N- to C-terminus: Photoreceptor disk component PRCD (54 aa).

The S-palmitoyl cysteine moiety is linked to residue Cys-2. Positions 24–54 are disordered; sequence QPEPNGVDGAVSGSSLETDLQSSGREKEPLK. Positions 35 to 46 are enriched in polar residues; sequence SGSSLETDLQSS.

The protein belongs to the PRCD family. Interacts with RHO/rhodopsin; the interaction promotes PRCD stability. In terms of processing, palmitoylated at Cys-2. Palmitoylation is essential for protein stability and trafficking to the photoreceptor outer segment, but does not appear to be essential for membrane localization. Probably palmitoylated by ZDHHC3. Post-translationally, phosphorylated. As to expression, expressed in retina (at protein level).

It localises to the cell projection. It is found in the cilium. The protein localises to the photoreceptor outer segment. Its subcellular location is the membrane. The protein resides in the endoplasmic reticulum. It localises to the golgi apparatus. In terms of biological role, involved in vision. In Bos taurus (Bovine), this protein is Photoreceptor disk component PRCD.